Consider the following 427-residue polypeptide: Synaptotagmin-A (427 aa).

Residues 1–57 are Vesicular-facing; the sequence is MKLTEAYHDALAALPATPPLPTAVANATEAAAGSEEGKQDGFSKVKVKEKFMNELNK. The N-linked (GlcNAc...) asparagine glycan is linked to N26. The chain crosses the membrane as a helical span at residues 58–84; it reads IPLPPWALVAIAIVAIILGLTCCFCIC. Residues 85-427 are Cytoplasmic-facing; it reads KKCLLKKKNK…EVDATLGMKK (343 aa). The tract at residues 96-145 is disordered; that stretch reads KGKEKGGKNAMTMKDVKEMGKSGKEQALKDEDEDAETGLTTDGKEEEKED. Positions 109-124 are enriched in basic and acidic residues; that stretch reads KDVKEMGKSGKEQALK. Residues 141 to 387 are phospholipid binding; the sequence is EEKEDEKLGK…AIGKVFVGYN (247 aa). 2 C2 domains span residues 147 to 266 and 278 to 411; these read KLGK…EEWR and KLGD…AQWH. Residues L177, D178, D184, D236, F237, D238, S241, K242, D244, D309, D315, D369, D371, and D377 each contribute to the Ca(2+) site.

Belongs to the synaptotagmin family. Homodimer or homotrimer (possible). Ca(2+) serves as cofactor. As to expression, forebrain, cerebellum and neuroendocrine cells.

It localises to the cytoplasmic vesicle. Its subcellular location is the secretory vesicle. It is found in the synaptic vesicle membrane. The protein resides in the synapse. May have a regulatory role in the membrane interactions during trafficking of synaptic vesicles at the active zone of the synapse. It binds acidic phospholipids with a specificity that requires the presence of both an acidic head group and a diacyl backbone. This chain is Synaptotagmin-A (P65-A), found in Diplobatis ommata (Ocellated electric ray).